The sequence spans 484 residues: Ribosomal RNA small subunit methyltransferase F (484 aa).

Residues 119 to 125 (ASAPGSK), glutamate 143, aspartate 170, and aspartate 188 each bind S-adenosyl-L-methionine. Cysteine 241 (nucleophile) is an active-site residue.

It belongs to the class I-like SAM-binding methyltransferase superfamily. RsmB/NOP family.

The protein localises to the cytoplasm. The catalysed reaction is cytidine(1407) in 16S rRNA + S-adenosyl-L-methionine = 5-methylcytidine(1407) in 16S rRNA + S-adenosyl-L-homocysteine + H(+). Specifically methylates the cytosine at position 1407 (m5C1407) of 16S rRNA. This is Ribosomal RNA small subunit methyltransferase F from Shewanella frigidimarina (strain NCIMB 400).